The chain runs to 86 residues: Small ribosomal subunit protein bS16 (86 aa).

It belongs to the bacterial ribosomal protein bS16 family.

This is Small ribosomal subunit protein bS16 from Borrelia garinii subsp. bavariensis (strain ATCC BAA-2496 / DSM 23469 / PBi) (Borreliella bavariensis).